The following is a 147-amino-acid chain: Peptide deformylase (147 aa).

Fe cation-binding residues include Cys88 and His130. Glu131 is a catalytic residue. A Fe cation-binding site is contributed by His134.

The protein belongs to the polypeptide deformylase family. Fe(2+) is required as a cofactor.

The catalysed reaction is N-terminal N-formyl-L-methionyl-[peptide] + H2O = N-terminal L-methionyl-[peptide] + formate. In terms of biological role, removes the formyl group from the N-terminal Met of newly synthesized proteins. Requires at least a dipeptide for an efficient rate of reaction. N-terminal L-methionine is a prerequisite for activity but the enzyme has broad specificity at other positions. This chain is Peptide deformylase, found in Clostridium botulinum (strain Alaska E43 / Type E3).